The chain runs to 60 residues: Large ribosomal subunit protein bL32 (60 aa).

The segment at 1–60 (MAVQQNKKSPSKRGMHRSHDFLVNPSTAIEPTTGETHLRHHISPNGFYRGRKVLKTKADE) is disordered. Polar residues predominate over residues 24 to 35 (NPSTAIEPTTGE). A compositionally biased stretch (basic residues) spans 49–60 (RGRKVLKTKADE).

This sequence belongs to the bacterial ribosomal protein bL32 family.

The sequence is that of Large ribosomal subunit protein bL32 from Bordetella petrii (strain ATCC BAA-461 / DSM 12804 / CCUG 43448).